Consider the following 147-residue polypeptide: Large ribosomal subunit protein bL9 (147 aa).

Belongs to the bacterial ribosomal protein bL9 family.

In terms of biological role, binds to the 23S rRNA. The protein is Large ribosomal subunit protein bL9 of Geotalea daltonii (strain DSM 22248 / JCM 15807 / FRC-32) (Geobacter daltonii).